We begin with the raw amino-acid sequence, 189 residues long: MGVFNEYKRLAAGKLLIASANLLESNFKRTVLMMCEHNPQGSLGFILNRPMEFQVREAVAGFDEVDEPLHMGGPVQSNTVHFLHMRGDLIDGSEQILPGLYWGGDREELGYLLNTGVLKPSEIRFFLGYAGWSAGQLEAEFEEGSWYTADATPAMVFSGEYERMWSRTVRSKGGEYQLIANSPELPGLN.

Belongs to the UPF0301 (AlgH) family.

The polypeptide is UPF0301 protein Plut_0637 (Chlorobium luteolum (strain DSM 273 / BCRC 81028 / 2530) (Pelodictyon luteolum)).